Reading from the N-terminus, the 341-residue chain is Major capsid protein (341 aa).

A coiled-coil region spans residues 109-129 (RRIILQNMKDEELAIAQVEEK).

It belongs to the lambda phage major capsid protein family. Homomultimer.

The protein resides in the virion. It localises to the host cytoplasm. Its function is as follows. Assembles to form an icosahedral capsid with a T=7 symmetry. The icosahedral capsid is about 60 nm in diameter and composed of 415 major capsid proteins. The assembly is primed by the interaction between capsid assembly protease and portal dodecamer, and major capsid proteins assemble cooperatively to form the procapsid with the help of capsid scaffolding protein. Major capsid protein forms hexons and pentons of the icosahedron. Viral genomic DNA is packaged into the procapsid through the portal vertex. The packaging triggers a dramatic reconfiguration of the capsid shell. The chain is Major capsid protein from Escherichia coli (Bacteriophage N15).